The sequence spans 200 residues: Lipopolysaccharide core heptose(II)-phosphate phosphatase (200 aa).

An N-terminal signal peptide occupies residues 1-25 (MLAFCRSSLKSKKYIIILLALAAIA).

The protein belongs to the phosphoglycerate mutase family. Ais subfamily.

It is found in the periplasm. It functions in the pathway bacterial outer membrane biogenesis; lipopolysaccharide metabolism. In terms of biological role, catalyzes the dephosphorylation of heptose(II) of the outer membrane lipopolysaccharide core. This is Lipopolysaccharide core heptose(II)-phosphate phosphatase from Escherichia coli (strain ATCC 8739 / DSM 1576 / NBRC 3972 / NCIMB 8545 / WDCM 00012 / Crooks).